Reading from the N-terminus, the 337-residue chain is Ornithine carbamoyltransferase, catabolic (337 aa).

Residues serine 57–threonine 60, glutamine 84, arginine 108, and histidine 135–glutamine 138 contribute to the carbamoyl phosphate site. Residues asparagine 167, aspartate 231, and serine 235–methionine 236 each bind L-ornithine. Carbamoyl phosphate-binding positions include cysteine 272–leucine 273 and arginine 317.

It belongs to the aspartate/ornithine carbamoyltransferase superfamily. OTCase family.

It localises to the cytoplasm. The catalysed reaction is carbamoyl phosphate + L-ornithine = L-citrulline + phosphate + H(+). It functions in the pathway amino-acid degradation; L-arginine degradation via ADI pathway; carbamoyl phosphate from L-arginine: step 2/2. In terms of biological role, reversibly catalyzes the transfer of the carbamoyl group from carbamoyl phosphate (CP) to the N(epsilon) atom of ornithine (ORN) to produce L-citrulline. In Streptococcus ratti, this protein is Ornithine carbamoyltransferase, catabolic.